Here is a 253-residue protein sequence, read N- to C-terminus: Tetraspanin-11 (253 aa).

4 consecutive transmembrane segments (helical) span residues 19-39 (LLFI…AVGV), 63-83 (ILIF…GAVI), 90-110 (LSAY…AGVL), and 220-240 (LLLM…GMIL).

Belongs to the tetraspanin (TM4SF) family.

The protein localises to the membrane. This chain is Tetraspanin-11 (TSPAN11), found in Bos taurus (Bovine).